The chain runs to 144 residues: Maximins 10/H15 (144 aa).

The signal sequence occupies residues 1 to 18 (MNFKYIVAVSFLIASAYA). A propeptide spanning residues 19 to 43 (RSVQNDEQSLSQRDVLEEESLREIR) is cleaved from the precursor. Residue serine 70 is modified to Serine amide. The propeptide occupies 74–123 (TAEDHEVMKRLEAVMRDLDSLDYPEEATERETRGFNQEEIANLFTKKEKR). Leucine amide is present on leucine 143.

It belongs to the bombinin family. As to expression, expressed by the skin glands.

The protein resides in the secreted. Maximin-10 shows antimicrobial activity against bacteria and against the fungus C.albicans. It has little hemolytic activity. Its function is as follows. Maximin-H15 shows antimicrobial activity against bacteria and against the fungus C.albicans. Shows strong hemolytic activity. The polypeptide is Maximins 10/H15 (Bombina maxima (Giant fire-bellied toad)).